A 146-amino-acid chain; its full sequence is Ribonuclease H (146 aa).

In terms of domain architecture, RNase H type-1 spans 1–141; that stretch reads MEKIDIFTDG…ADALANRGVE (141 aa). Mg(2+)-binding residues include Asp-9, Glu-47, Asp-69, and Asp-133.

It belongs to the RNase H family. Monomer. Requires Mg(2+) as cofactor.

It localises to the cytoplasm. The catalysed reaction is Endonucleolytic cleavage to 5'-phosphomonoester.. Endonuclease that specifically degrades the RNA of RNA-DNA hybrids. In Herminiimonas arsenicoxydans, this protein is Ribonuclease H.